Consider the following 716-residue polypeptide: Polyribonucleotide nucleotidyltransferase (716 aa).

Mg(2+) contacts are provided by Asp488 and Asp494. The KH domain maps to 555-614 (PKIETITIPTDKIREVIGTGGKVIREIVATTGAKVDINDEGTVKVSASDGAKIKAAIDWI). Residues 624 to 692 (GAIYDGKVVK…DRGKTKLSMK (69 aa)) form the S1 motif domain. The interval 695–716 (DQETGEDLSKKEAVSPEEAVNT) is disordered.

It belongs to the polyribonucleotide nucleotidyltransferase family. The cofactor is Mg(2+).

The protein localises to the cytoplasm. It catalyses the reaction RNA(n+1) + phosphate = RNA(n) + a ribonucleoside 5'-diphosphate. Functionally, involved in mRNA degradation. Catalyzes the phosphorolysis of single-stranded polyribonucleotides processively in the 3'- to 5'-direction. The polypeptide is Polyribonucleotide nucleotidyltransferase (Caulobacter sp. (strain K31)).